The primary structure comprises 502 residues: Glycerol kinase (502 aa).

Residue Thr-15 participates in ADP binding. Thr-15, Thr-16, and Ser-17 together coordinate ATP. Thr-15 serves as a coordination point for sn-glycerol 3-phosphate. Residue Arg-19 participates in ADP binding. Residues Arg-85, Glu-86, and Tyr-137 each contribute to the sn-glycerol 3-phosphate site. Positions 85, 86, and 137 each coordinate glycerol. His-233 is modified (phosphohistidine; by HPr). Sn-glycerol 3-phosphate is bound at residue Asp-247. The glycerol site is built by Asp-247 and Gln-248. ADP contacts are provided by Thr-269 and Gly-312. ATP contacts are provided by Thr-269, Gly-312, Gln-316, and Gly-413. 2 residues coordinate ADP: Gly-413 and Asn-417.

It belongs to the FGGY kinase family. Homotetramer and homodimer (in equilibrium). In terms of processing, the phosphoenolpyruvate-dependent sugar phosphotransferase system (PTS), including enzyme I, and histidine-containing protein (HPr) are required for the phosphorylation, which leads to the activation of the enzyme.

It carries out the reaction glycerol + ATP = sn-glycerol 3-phosphate + ADP + H(+). The protein operates within polyol metabolism; glycerol degradation via glycerol kinase pathway; sn-glycerol 3-phosphate from glycerol: step 1/1. Its activity is regulated as follows. Activated by phosphorylation and inhibited by fructose 1,6-bisphosphate (FBP). In terms of biological role, key enzyme in the regulation of glycerol uptake and metabolism. Catalyzes the phosphorylation of glycerol to yield sn-glycerol 3-phosphate. The polypeptide is Glycerol kinase (Streptococcus agalactiae serotype Ia (strain ATCC 27591 / A909 / CDC SS700)).